Consider the following 419-residue polypeptide: MQKTMTRHLSRNRKPHEKVSHVPRRGPRTYQDPCDPGWYVVNSRRGVAPQPTPTSGSLGRKPYNPGCPSRKWTKKIIAAPKHGFYSAKDHGYWVPKVQAQKKYNPPRKVVGGGRSYKDVLSTPAKIQIKPTPESILLAQKIQNSTFKSRGKVTLSQEKIPLINRFQELLIEKELMEDVEESQPFVANDSRAQHLFCKKVLRKVGRREILVCPITNEESHVNLKTGIKARIVDSMGSVVHEENIPAYNRGHVVKSMRKRIVHERESKPIPVIGSFSDRAIRVLCDDHTDELASASSVPSEWKPSKNQRAVPCLLQNESATVVSAKPDWYAPVKVCTHKQYMKVQRVFLDAMFIMRALRFHIDAKILRETWVKCWLQVHRKNVAFPGWMIAPLLSGTVPCEQEFLLPRVNETRAFATVCYA.

Positions 1–27 (MQKTMTRHLSRNRKPHEKVSHVPRRGP) are enriched in basic residues. Positions 1-66 (MQKTMTRHLS…SLGRKPYNPG (66 aa)) are disordered.

It belongs to the nepovirus satellite RNA 48 kDa protein family.

In Allium porrum (Leek), this protein is Satellite RNA 48 kDa protein.